Here is a 1192-residue protein sequence, read N- to C-terminus: Coiled-coil domain-containing protein 40 (1192 aa).

Disordered stretches follow at residues 1-78, 126-153, 173-196, 211-246, and 261-289; these read MMDA…PGMD, KAKH…LEVS, SSPE…NVSA, EPIE…YQRD, and GSLT…STPR. Residues 27-45 are compositionally biased toward acidic residues; the sequence is PETEVEFIGETAPDTDVEF. A compositionally biased stretch (pro residues) spans 215 to 228; it reads PTEPPEPAEPPKPA. The segment covering 267–279 has biased composition (acidic residues); that stretch reads DTDDLPLETDEPP. Ser-306 carries the post-translational modification Phosphoserine. Coiled coils occupy residues 308–369, 425–451, 581–649, 733–768, 830–871, 919–972, and 1044–1118; these read EALL…ATKQ, KTCQ…ALHL, DSEI…MLNK, NTNC…EIAR, LQQE…KIAH, LRTL…EMRS, and QQRE…IVTL.

The protein belongs to the CCDC40 family. Specifically expressed in the embryonic node and midline.

Its subcellular location is the cytoplasm. It is found in the cell projection. The protein resides in the cilium. Functionally, required for assembly of dynein regulatory complex (DRC) and inner dynein arm (IDA) complexes, which are responsible for ciliary beat regulation, thereby playing a central role in motility in cilia and flagella. Probably acts together with CCDC39 to form a molecular ruler that determines the 96 nanometer (nm) repeat length and arrangements of components in cilia and flagella. Not required for outer dynein arm complexes assembly. Required for axonemal recruitment of CCDC39. This chain is Coiled-coil domain-containing protein 40, found in Mus musculus (Mouse).